Here is a 1404-residue protein sequence, read N- to C-terminus: DNA-directed RNA polymerase subunit beta' (1404 aa).

Residues C70, C72, C85, and C88 each coordinate Zn(2+). Mg(2+) is bound by residues D460, D462, and D464. C814, C888, C895, and C898 together coordinate Zn(2+).

The protein belongs to the RNA polymerase beta' chain family. The RNAP catalytic core consists of 2 alpha, 1 beta, 1 beta' and 1 omega subunit. When a sigma factor is associated with the core the holoenzyme is formed, which can initiate transcription. The cofactor is Mg(2+). Zn(2+) is required as a cofactor.

It carries out the reaction RNA(n) + a ribonucleoside 5'-triphosphate = RNA(n+1) + diphosphate. DNA-dependent RNA polymerase catalyzes the transcription of DNA into RNA using the four ribonucleoside triphosphates as substrates. This is DNA-directed RNA polymerase subunit beta' from Shewanella halifaxensis (strain HAW-EB4).